Here is an 89-residue protein sequence, read N- to C-terminus: Small ribosomal subunit protein uS15 (89 aa).

Residues 1–10 (MSITAERKAE) show a composition bias toward basic and acidic residues. The disordered stretch occupies residues 1 to 24 (MSITAERKAEVIQGNANKAGDTGS).

The protein belongs to the universal ribosomal protein uS15 family. Part of the 30S ribosomal subunit. Forms a bridge to the 50S subunit in the 70S ribosome, contacting the 23S rRNA.

In terms of biological role, one of the primary rRNA binding proteins, it binds directly to 16S rRNA where it helps nucleate assembly of the platform of the 30S subunit by binding and bridging several RNA helices of the 16S rRNA. Forms an intersubunit bridge (bridge B4) with the 23S rRNA of the 50S subunit in the ribosome. The sequence is that of Small ribosomal subunit protein uS15 from Rhodopseudomonas palustris (strain HaA2).